The primary structure comprises 159 residues: Large ribosomal subunit protein uL11 (159 aa).

Positions 137–149 (EGKDPREVQREVD) are enriched in basic and acidic residues. The disordered stretch occupies residues 137–159 (EGKDPREVQREVDSGAWDKLLGG).

The protein belongs to the universal ribosomal protein uL11 family. Part of the ribosomal stalk of the 50S ribosomal subunit. Interacts with L10 and the large rRNA to form the base of the stalk. L10 forms an elongated spine to which L12 dimers bind in a sequential fashion forming a multimeric L10(L12)X complex.

Forms part of the ribosomal stalk which helps the ribosome interact with GTP-bound translation factors. This Korarchaeum cryptofilum (strain OPF8) protein is Large ribosomal subunit protein uL11.